Here is a 314-residue protein sequence, read N- to C-terminus: Carbamate kinase (314 aa).

Belongs to the carbamate kinase family. In terms of assembly, homodimer.

It is found in the cytoplasm. It catalyses the reaction hydrogencarbonate + NH4(+) + ATP = carbamoyl phosphate + ADP + H2O + H(+). The sequence is that of Carbamate kinase (cpkA) from Pyrococcus horikoshii (strain ATCC 700860 / DSM 12428 / JCM 9974 / NBRC 100139 / OT-3).